Consider the following 616-residue polypeptide: Chaperone protein HscA (616 aa).

This sequence belongs to the heat shock protein 70 family.

Functionally, chaperone involved in the maturation of iron-sulfur cluster-containing proteins. Has a low intrinsic ATPase activity which is markedly stimulated by HscB. Involved in the maturation of IscU. The polypeptide is Chaperone protein HscA (Escherichia coli O17:K52:H18 (strain UMN026 / ExPEC)).